We begin with the raw amino-acid sequence, 355 residues long: Phosphate acyltransferase (355 aa).

This sequence belongs to the PlsX family. Homodimer. Probably interacts with PlsY.

The protein resides in the cytoplasm. The catalysed reaction is a fatty acyl-[ACP] + phosphate = an acyl phosphate + holo-[ACP]. It functions in the pathway lipid metabolism; phospholipid metabolism. Its function is as follows. Catalyzes the reversible formation of acyl-phosphate (acyl-PO(4)) from acyl-[acyl-carrier-protein] (acyl-ACP). This enzyme utilizes acyl-ACP as fatty acyl donor, but not acyl-CoA. The sequence is that of Phosphate acyltransferase from Azorhizobium caulinodans (strain ATCC 43989 / DSM 5975 / JCM 20966 / LMG 6465 / NBRC 14845 / NCIMB 13405 / ORS 571).